The sequence spans 198 residues: Cytochrome c oxidase subunit 2 (198 aa).

A helical membrane pass occupies residues 1–13; the sequence is AICSLVLYLLTLM. The Mitochondrial matrix portion of the chain corresponds to 14 to 26; the sequence is LMEKLSSNTVDAQ. The chain crosses the membrane as a helical span at residues 27-54; it reads EVELIWTILPAIVLILLALPSLQILYMM. The Mitochondrial intermembrane portion of the chain corresponds to 55–198; the sequence is DEIDEPDLTL…WSSLLSTSSL (144 aa). 6 residues coordinate Cu cation: His-128, Cys-163, Glu-165, Cys-167, His-171, and Met-174. Glu-165 contacts Mg(2+).

It belongs to the cytochrome c oxidase subunit 2 family. Component of the cytochrome c oxidase (complex IV, CIV), a multisubunit enzyme composed of 14 subunits. The complex is composed of a catalytic core of 3 subunits MT-CO1, MT-CO2 and MT-CO3, encoded in the mitochondrial DNA, and 11 supernumerary subunits COX4I, COX5A, COX5B, COX6A, COX6B, COX6C, COX7A, COX7B, COX7C, COX8 and NDUFA4, which are encoded in the nuclear genome. The complex exists as a monomer or a dimer and forms supercomplexes (SCs) in the inner mitochondrial membrane with NADH-ubiquinone oxidoreductase (complex I, CI) and ubiquinol-cytochrome c oxidoreductase (cytochrome b-c1 complex, complex III, CIII), resulting in different assemblies (supercomplex SCI(1)III(2)IV(1) and megacomplex MCI(2)III(2)IV(2)). Found in a complex with TMEM177, COA6, COX18, COX20, SCO1 and SCO2. Interacts with TMEM177 in a COX20-dependent manner. Interacts with COX20. Interacts with COX16. Cu cation is required as a cofactor.

The protein resides in the mitochondrion inner membrane. The enzyme catalyses 4 Fe(II)-[cytochrome c] + O2 + 8 H(+)(in) = 4 Fe(III)-[cytochrome c] + 2 H2O + 4 H(+)(out). Functionally, component of the cytochrome c oxidase, the last enzyme in the mitochondrial electron transport chain which drives oxidative phosphorylation. The respiratory chain contains 3 multisubunit complexes succinate dehydrogenase (complex II, CII), ubiquinol-cytochrome c oxidoreductase (cytochrome b-c1 complex, complex III, CIII) and cytochrome c oxidase (complex IV, CIV), that cooperate to transfer electrons derived from NADH and succinate to molecular oxygen, creating an electrochemical gradient over the inner membrane that drives transmembrane transport and the ATP synthase. Cytochrome c oxidase is the component of the respiratory chain that catalyzes the reduction of oxygen to water. Electrons originating from reduced cytochrome c in the intermembrane space (IMS) are transferred via the dinuclear copper A center (CU(A)) of subunit 2 and heme A of subunit 1 to the active site in subunit 1, a binuclear center (BNC) formed by heme A3 and copper B (CU(B)). The BNC reduces molecular oxygen to 2 water molecules using 4 electrons from cytochrome c in the IMS and 4 protons from the mitochondrial matrix. The sequence is that of Cytochrome c oxidase subunit 2 (MT-CO2) from Tinamus major (Great tinamou).